A 501-amino-acid polypeptide reads, in one-letter code: MFEFGSIIVTVIAVFITIPICLYLFLTRHFNFWKKRGVIYVRPLPFFGNLKDVLLQKKYIGYYLKDIYEENINKPYVGIFAFDQPALLVNDLEIVKNILVKDSRNFIDRMVKVDESLSPLNANAIFALRGQKWKHVRTSLTPTFTTGKMKNMFYLVDKCGQQLVLFIEKFAKAENPVAVKDAVERFTMDVTAMCAFGIECNSLQDPKAEFSNLLHRIFQLSFTSAVANLATFFAPWVQNFFRLKLMDSEIEDRIRDIVWRAVHLREKTGEKRNDLLDYLMELRTSETSKLDGDDFVAQAFGFLVAGFHTSSMTLTFALYELSVHQDIQTTARTEIKDVLEHHKKKVTYYSIKDMKYLDMVVNETLRKYPAIPFLDRRCQEDYPLTQDLMLPAGTGVYIPVYALHHDSKYFPSPAKFDPERFSEKNKQNIPHFAYMPFGEGPRNCIGMRFGSMQVKAALIHILSNFEVSPCKETRIPLIIDPKPFNLMALGGVYLNITKFNN.

Cysteine 444 is a binding site for heme.

It belongs to the cytochrome P450 family. The cofactor is heme.

Its subcellular location is the endoplasmic reticulum membrane. The protein localises to the microsome membrane. This Blattella germanica (German cockroach) protein is Cytochrome P450 6j1 (CYP6J1).